We begin with the raw amino-acid sequence, 274 residues long: 2,3,4,5-tetrahydropyridine-2,6-dicarboxylate N-succinyltransferase (274 aa).

Residues Arg-104 and Asp-141 each contribute to the substrate site.

It belongs to the transferase hexapeptide repeat family. In terms of assembly, homotrimer.

It is found in the cytoplasm. The enzyme catalyses (S)-2,3,4,5-tetrahydrodipicolinate + succinyl-CoA + H2O = (S)-2-succinylamino-6-oxoheptanedioate + CoA. It functions in the pathway amino-acid biosynthesis; L-lysine biosynthesis via DAP pathway; LL-2,6-diaminopimelate from (S)-tetrahydrodipicolinate (succinylase route): step 1/3. The sequence is that of 2,3,4,5-tetrahydropyridine-2,6-dicarboxylate N-succinyltransferase from Shewanella loihica (strain ATCC BAA-1088 / PV-4).